The sequence spans 325 residues: DDB1- and CUL4-associated factor 7 homolog (325 aa).

4 WD repeats span residues 62–104, 115–155, 158–197, and 247–287; these read EHPY…RSIK, EFCA…AKTQ, AHDK…HSTI, and FHKS…KPIE.

The protein belongs to the WD repeat DCAF7 family.

This chain is DDB1- and CUL4-associated factor 7 homolog (wdr68), found in Dictyostelium discoideum (Social amoeba).